A 457-amino-acid chain; its full sequence is Dolichol phosphate-mannose mannosyltransferase (457 aa).

Topologically, residues Met-1–Asn-12 are cytoplasmic. A helical transmembrane segment spans residues Ser-13–Leu-33. The Extracellular segment spans residues Asn-34–His-91. A helical transmembrane segment spans residues Thr-92–Ile-112. The Cytoplasmic portion of the chain corresponds to Thr-113–Gln-120. A helical transmembrane segment spans residues Phe-121 to Val-141. Residues Phe-142–Ala-173 are Extracellular-facing. The helical transmembrane segment at Ala-174–Ile-194 threads the bilayer. Residues Ser-195–Thr-211 lie on the Cytoplasmic side of the membrane. The chain crosses the membrane as a helical span at residues Ile-212–Val-232. At Glu-233–Lys-259 the chain is on the extracellular side. Residues Leu-260 to Ile-280 traverse the membrane as a helical segment. The Cytoplasmic segment spans residues Arg-281–Arg-283. The helical transmembrane segment at Trp-284–Gly-304 threads the bilayer. Residues Ala-305–Asp-307 are Extracellular-facing. The helical transmembrane segment at Leu-308–Thr-328 threads the bilayer. Over Lys-329–Ser-337 the chain is Cytoplasmic. A helical membrane pass occupies residues Ile-338 to Gly-358. The Extracellular portion of the chain corresponds to Val-359 to Pro-457.

The protein localises to the cell membrane. It participates in cell surface structure biogenesis; S-layer biogenesis. The protein operates within protein modification; protein glycosylation. Functionally, involved in the assembly of a N-linked pentasaccharide that decorates the S-layer glycoprotein and flagellins. Transfers mannose, the terminal pentasaccharide residue, from its dedicated dolichol phosphate carrier to the protein-bound glycan comprising the first four subunits of the N-linked pentasaccharide. The protein is Dolichol phosphate-mannose mannosyltransferase (aglS) of Haloferax volcanii (strain ATCC 29605 / DSM 3757 / JCM 8879 / NBRC 14742 / NCIMB 2012 / VKM B-1768 / DS2) (Halobacterium volcanii).